A 233-amino-acid chain; its full sequence is Ribonuclease 3 (233 aa).

Positions 4–126 (LNKLMERLGH…IVGSIYIDAG (123 aa)) constitute an RNase III domain. Glutamate 39 is a Mg(2+) binding site. Residue aspartate 43 is part of the active site. Positions 112 and 115 each coordinate Mg(2+). The active site involves glutamate 115. A DRBM domain is found at 153-222 (DAKSLLQEWL…AKRFLELLDD (70 aa)).

It belongs to the ribonuclease III family. As to quaternary structure, homodimer. Mg(2+) serves as cofactor.

It is found in the cytoplasm. It catalyses the reaction Endonucleolytic cleavage to 5'-phosphomonoester.. In terms of biological role, digests double-stranded RNA. Involved in the processing of primary rRNA transcript to yield the immediate precursors to the large and small rRNAs (23S and 16S). Processes some mRNAs, and tRNAs when they are encoded in the rRNA operon. Processes pre-crRNA and tracrRNA of type II CRISPR loci if present in the organism. The protein is Ribonuclease 3 of Coxiella burnetii (strain CbuG_Q212) (Coxiella burnetii (strain Q212)).